The following is a 250-amino-acid chain: Flavin-dependent thymidylate synthase (250 aa).

Positions 7–233 constitute a ThyX domain; that stretch reads LRVQLIAKTE…PQVFSDFEIT (227 aa). Residues serine 71, 95-97, and glutamine 103 contribute to the FAD site; that span reads RHR. DUMP is bound by residues 92 to 95, 103 to 107, and arginine 172; these read ELIR and QLSQR. Positions 95–105 match the ThyX motif motif; that stretch reads RHRHFSYSQLS. FAD-binding positions include 188–190 and histidine 194; that span reads NYR. Arginine 199 lines the dUMP pocket. Catalysis depends on arginine 199, which acts as the Involved in ionization of N3 of dUMP, leading to its activation.

Belongs to the thymidylate synthase ThyX family. Homotetramer. FAD serves as cofactor.

It carries out the reaction dUMP + (6R)-5,10-methylene-5,6,7,8-tetrahydrofolate + NADPH + H(+) = dTMP + (6S)-5,6,7,8-tetrahydrofolate + NADP(+). The protein operates within pyrimidine metabolism; dTTP biosynthesis. In terms of biological role, catalyzes the reductive methylation of 2'-deoxyuridine-5'-monophosphate (dUMP) to 2'-deoxythymidine-5'-monophosphate (dTMP) while utilizing 5,10-methylenetetrahydrofolate (mTHF) as the methyl donor, and NADPH and FADH(2) as the reductant. This is Flavin-dependent thymidylate synthase from Mycolicibacterium gilvum (strain PYR-GCK) (Mycobacterium gilvum (strain PYR-GCK)).